The primary structure comprises 343 residues: MSLRGKNVTVHDMTLRDGMHPKRHLMTLDQMVSIATGLDEAGIPLIEVTHGDGLGGSSVNYGFPAHTDEEYLGTVIPKMKNAKISALLLPGIGTVDHLKMARDLGVHTIRVATHCTEADVSEQHITMARKLDMDTVGFLMMSHMNGAEGLVKQAKLMEGYGANCIYVTDSAGHLLPEGVKERLGAVRKALKPETELGFHGHHNLAMGVANSIAAIEVGANRIDAAAAGLGAGAGNTPMEVLIAVCSLMGIETGVDVAKITDVAEDLVVPMMDFPIRIDRDALTLGYAGVYGSFLLFAKRASAKYGVPARDILVELGRRGMVGGQEDMIEDTAITMARERGLKV.

Residues 8 to 260 (VTVHDMTLRD…ETGVDVAKIT (253 aa)) form the Pyruvate carboxyltransferase domain. Residue 16 to 17 (RD) participates in substrate binding. Residue Asp17 coordinates Mn(2+). His20 (proton acceptor) is an active-site residue. 2 residues coordinate substrate: Ser170 and His199. His199 and His201 together coordinate Mn(2+). Tyr290 serves as a coordination point for substrate.

Belongs to the 4-hydroxy-2-oxovalerate aldolase family.

It carries out the reaction (S)-4-hydroxy-2-oxopentanoate = acetaldehyde + pyruvate. The protein is 4-hydroxy-2-oxovalerate aldolase 1 of Dechloromonas aromatica (strain RCB).